The primary structure comprises 398 residues: Acetate kinase (398 aa).

Asn8 lines the Mg(2+) pocket. Residue Lys15 coordinates ATP. Arg89 serves as a coordination point for substrate. Asp146 functions as the Proton donor/acceptor in the catalytic mechanism. ATP is bound by residues His206–Gly210, Asp283–Arg285, and Gly331–Asn335. Glu383 contacts Mg(2+).

The protein belongs to the acetokinase family. In terms of assembly, homodimer. Requires Mg(2+) as cofactor. Mn(2+) is required as a cofactor.

The protein localises to the cytoplasm. It catalyses the reaction acetate + ATP = acetyl phosphate + ADP. It participates in metabolic intermediate biosynthesis; acetyl-CoA biosynthesis; acetyl-CoA from acetate: step 1/2. Functionally, catalyzes the formation of acetyl phosphate from acetate and ATP. Can also catalyze the reverse reaction. In Streptococcus pyogenes serotype M49 (strain NZ131), this protein is Acetate kinase.